The primary structure comprises 263 residues: HTH-type transcriptional repressor NanR (263 aa).

A disordered region spans residues 1 to 21 (MGLMNAFDSQTEDSSPVIGRN). Residues 30 to 98 (KKLSEMVEEE…NGERARVSRP (69 aa)) form the HTH gntR-type domain. Residues 58-77 (ERELMAFFNVGRPSVREALA) constitute a DNA-binding region (H-T-H motif).

This sequence belongs to the NanR family.

Transcriptional repressor that controls expression of the genes required for the catabolism of sialic acids. The polypeptide is HTH-type transcriptional repressor NanR (Escherichia coli O7:K1 (strain IAI39 / ExPEC)).